A 452-amino-acid chain; its full sequence is MGRLFGTDGVRGVANADLTAELALGLSVAAAHVLAEAGTFAGHRPTAVVGRDPRASGEFLEAAVVAGLASAGVDVLRVGVLPTPAVAYLTGSLGADIGVMLSASHNAMPDNGVKFFARGGHKLADELEDRIETVYEQHRTGEPWSRPTGAGVGRVTDYTEGFDRYVAHLIGVLPNRLDGLKVVLDEAHGAAARVSPEAFARAGAEVVTIGADPDGLNINDGCGSTHLELLRAAVVEHGADLGIAHDGDADRCLAVDAAGEEVDGDQILAVLALAMRDAGQLRKDTVVGTVMSNLGFKLAMEREGIRLVQTAVGDRYVLESMKAEGFALGGEQSGHVIVLDHATTGDGTLTGLMLAARVAATGRSLAELAGVMQRLPQVLINVPDVDKTRVNTSSELATAVVEAERELGENGRVLLRQSGTEPLVRVMVEAADIEQARAVAGRLADVVKSALG.

Serine 104 functions as the Phosphoserine intermediate in the catalytic mechanism. Mg(2+) contacts are provided by serine 104, aspartate 246, aspartate 248, and aspartate 250. Phosphoserine is present on serine 104.

It belongs to the phosphohexose mutase family. Mg(2+) serves as cofactor. Activated by phosphorylation.

The enzyme catalyses alpha-D-glucosamine 1-phosphate = D-glucosamine 6-phosphate. In terms of biological role, catalyzes the conversion of glucosamine-6-phosphate to glucosamine-1-phosphate. The protein is Phosphoglucosamine mutase of Streptomyces griseus subsp. griseus (strain JCM 4626 / CBS 651.72 / NBRC 13350 / KCC S-0626 / ISP 5235).